The sequence spans 431 residues: Phosphoribosylamine--glycine ligase (431 aa).

Residues 108–315 (KDFLARHEIP…LVLLVEAAFA (208 aa)) form the ATP-grasp domain. 134-195 (LQEKGAPIVI…EEFLDGEEAS (62 aa)) contacts ATP. Mg(2+) is bound by residues Glu285 and Asn287.

Belongs to the GARS family. The cofactor is Mg(2+). Requires Mn(2+) as cofactor.

The enzyme catalyses 5-phospho-beta-D-ribosylamine + glycine + ATP = N(1)-(5-phospho-beta-D-ribosyl)glycinamide + ADP + phosphate + H(+). Its pathway is purine metabolism; IMP biosynthesis via de novo pathway; N(1)-(5-phospho-D-ribosyl)glycinamide from 5-phospho-alpha-D-ribose 1-diphosphate: step 2/2. In Pseudomonas putida (strain ATCC 47054 / DSM 6125 / CFBP 8728 / NCIMB 11950 / KT2440), this protein is Phosphoribosylamine--glycine ligase.